Consider the following 328-residue polypeptide: Mitochondrial GTPase 1 (328 aa).

The region spanning 10–199 (KTTLKRLRDS…MVDTPGIMLP (190 aa)) is the CP-type G domain. Residues 57–60 (NKCD), 143–148 (NVGKSS), and Gly-195 contribute to the GTP site.

It belongs to the TRAFAC class YlqF/YawG GTPase family. MTG1 subfamily.

Its subcellular location is the mitochondrion inner membrane. Its function is as follows. Mitochondrial GTPase involved in assembly of the large ribosomal subunit. Plays a role in expression of the mitochondrial translational machinery. This chain is Mitochondrial GTPase 1, found in Schizosaccharomyces japonicus (strain yFS275 / FY16936) (Fission yeast).